Consider the following 154-residue polypeptide: Small ribosomal subunit protein uS15 (154 aa).

Residues 1 to 11 (MSRLHAHKRYH) are compositionally biased toward basic residues. Residues 1 to 24 (MSRLHAHKRYHGQSGSKRPLRTTK) are disordered.

This sequence belongs to the universal ribosomal protein uS15 family. Part of the 30S ribosomal subunit.

This chain is Small ribosomal subunit protein uS15, found in Nanoarchaeum equitans (strain Kin4-M).